The following is a 145-amino-acid chain: Flagellar assembly factor FliW (145 aa).

This sequence belongs to the FliW family. Interacts with translational regulator CsrA and flagellin(s).

It localises to the cytoplasm. Its function is as follows. Acts as an anti-CsrA protein, binds CsrA and prevents it from repressing translation of its target genes, one of which is flagellin. Binds to flagellin and participates in the assembly of the flagellum. This Clostridium kluyveri (strain NBRC 12016) protein is Flagellar assembly factor FliW.